The following is a 240-amino-acid chain: Octanoyltransferase (240 aa).

The 185-residue stretch at Gly49 to Arg233 folds into the BPL/LPL catalytic domain. Substrate is bound by residues Arg87–His94, Ala162–Gly164, and Gly175–Ala177. Cys193 (acyl-thioester intermediate) is an active-site residue.

The protein belongs to the LipB family.

The protein resides in the cytoplasm. The enzyme catalyses octanoyl-[ACP] + L-lysyl-[protein] = N(6)-octanoyl-L-lysyl-[protein] + holo-[ACP] + H(+). The protein operates within protein modification; protein lipoylation via endogenous pathway; protein N(6)-(lipoyl)lysine from octanoyl-[acyl-carrier-protein]: step 1/2. Catalyzes the transfer of endogenously produced octanoic acid from octanoyl-acyl-carrier-protein onto the lipoyl domains of lipoate-dependent enzymes. Lipoyl-ACP can also act as a substrate although octanoyl-ACP is likely to be the physiological substrate. The chain is Octanoyltransferase from Bradyrhizobium sp. (strain BTAi1 / ATCC BAA-1182).